We begin with the raw amino-acid sequence, 205 residues long: Probable GTP-binding protein EngB (205 aa).

An EngB-type G domain is found at glutamine 29–serine 203. GTP is bound by residues glycine 37–serine 44, glycine 64–methionine 68, aspartate 82–glycine 85, threonine 149–aspartate 152, and phenylalanine 182–serine 184. 2 residues coordinate Mg(2+): serine 44 and threonine 66.

This sequence belongs to the TRAFAC class TrmE-Era-EngA-EngB-Septin-like GTPase superfamily. EngB GTPase family. The cofactor is Mg(2+).

Its function is as follows. Necessary for normal cell division and for the maintenance of normal septation. In Coxiella burnetii (strain CbuK_Q154) (Coxiella burnetii (strain Q154)), this protein is Probable GTP-binding protein EngB.